A 231-amino-acid polypeptide reads, in one-letter code: tRNA (guanine-N(1)-)-methyltransferase (231 aa).

Residues G112 and 132–137 each bind S-adenosyl-L-methionine; that span reads LGDFVL.

Belongs to the RNA methyltransferase TrmD family. Homodimer.

It is found in the cytoplasm. The catalysed reaction is guanosine(37) in tRNA + S-adenosyl-L-methionine = N(1)-methylguanosine(37) in tRNA + S-adenosyl-L-homocysteine + H(+). Functionally, specifically methylates guanosine-37 in various tRNAs. The chain is tRNA (guanine-N(1)-)-methyltransferase from Microcystis aeruginosa (strain NIES-843 / IAM M-2473).